A 299-amino-acid polypeptide reads, in one-letter code: Transcription factor BHLH148 (299 aa).

Residues 90-127 form a disordered region; it reads RMGGGGGGGEKGEGEEMEEEEEVPQRRRRGQGADVESS. A compositionally biased stretch (acidic residues) spans 102 to 111; that stretch reads EGEEMEEEEE. Positions 127–140 are basic motif; degenerate; the sequence is SRGFRHMMRERQRR. The bHLH domain maps to 127 to 176; the sequence is SRGFRHMMRERQRREKLSQSYADLYAMVSSRSKGDKNSIVQSAAIYIHEL. A helix-loop-helix motif region spans residues 141-176; the sequence is EKLSQSYADLYAMVSSRSKGDKNSIVQSAAIYIHEL. Residues 273–299 are disordered; that stretch reads ERNQPDSDAPFPGSKGWTQTSHVQNVF. Residues 288–299 show a composition bias toward polar residues; it reads GWTQTSHVQNVF.

Belongs to the bHLH protein family. As to quaternary structure, interacts with TIFY10A/JAZ6, TIFY10B/JAZ7, TIFY11A/JAZ9, TIFY11C/JAZ11, and TIFY11D/JAZ12.

Its subcellular location is the nucleus. Functionally, may act on an initial response of jasmonate-regulated gene expression toward drought tolerance as part of a BHLH148-TIFY11D/JAZ12-COI1A complex. The chain is Transcription factor BHLH148 from Oryza sativa subsp. japonica (Rice).